Here is a 250-residue protein sequence, read N- to C-terminus: Cytochrome c oxidase subunit 2 (250 aa).

Over methionine 1–asparagine 39 the chain is Mitochondrial intermembrane. Residues isoleucine 40–isoleucine 60 form a helical membrane-spanning segment. Residues asparagine 61–glutamate 81 lie on the Mitochondrial matrix side of the membrane. Residues leucine 82–tyrosine 104 traverse the membrane as a helical segment. Over leucine 105 to glutamine 250 the chain is Mitochondrial intermembrane. Positions 185, 220, 222, 224, 228, and 231 each coordinate Cu cation. Residue glutamate 222 coordinates Mg(2+).

This sequence belongs to the cytochrome c oxidase subunit 2 family. Component of the cytochrome c oxidase (complex IV, CIV), a multisubunit enzyme composed of a catalytic core of 3 subunits and several supernumerary subunits. The complex exists as a monomer or a dimer and forms supercomplexes (SCs) in the inner mitochondrial membrane with ubiquinol-cytochrome c oxidoreductase (cytochrome b-c1 complex, complex III, CIII). The cofactor is Cu cation.

It localises to the mitochondrion inner membrane. It catalyses the reaction 4 Fe(II)-[cytochrome c] + O2 + 8 H(+)(in) = 4 Fe(III)-[cytochrome c] + 2 H2O + 4 H(+)(out). Component of the cytochrome c oxidase, the last enzyme in the mitochondrial electron transport chain which drives oxidative phosphorylation. The respiratory chain contains 3 multisubunit complexes succinate dehydrogenase (complex II, CII), ubiquinol-cytochrome c oxidoreductase (cytochrome b-c1 complex, complex III, CIII) and cytochrome c oxidase (complex IV, CIV), that cooperate to transfer electrons derived from NADH and succinate to molecular oxygen, creating an electrochemical gradient over the inner membrane that drives transmembrane transport and the ATP synthase. Cytochrome c oxidase is the component of the respiratory chain that catalyzes the reduction of oxygen to water. Electrons originating from reduced cytochrome c in the intermembrane space (IMS) are transferred via the dinuclear copper A center (CU(A)) of subunit 2 and heme A of subunit 1 to the active site in subunit 1, a binuclear center (BNC) formed by heme A3 and copper B (CU(B)). The BNC reduces molecular oxygen to 2 water molecules using 4 electrons from cytochrome c in the IMS and 4 protons from the mitochondrial matrix. The sequence is that of Cytochrome c oxidase subunit 2 (COII) from Podospora anserina (strain S / ATCC MYA-4624 / DSM 980 / FGSC 10383) (Pleurage anserina).